A 431-amino-acid polypeptide reads, in one-letter code: Phosphomethylpyrimidine synthase (431 aa).

Substrate is bound by residues asparagine 66, methionine 95, tyrosine 124, histidine 163, 185-187 (SRG), 226-229 (DGLR), and glutamate 265. Histidine 269 serves as a coordination point for Zn(2+). Tyrosine 292 is a binding site for substrate. A Zn(2+)-binding site is contributed by histidine 333. Residues cysteine 408, cysteine 411, and cysteine 415 each coordinate [4Fe-4S] cluster.

It belongs to the ThiC family. [4Fe-4S] cluster serves as cofactor.

It carries out the reaction 5-amino-1-(5-phospho-beta-D-ribosyl)imidazole + S-adenosyl-L-methionine = 4-amino-2-methyl-5-(phosphooxymethyl)pyrimidine + CO + 5'-deoxyadenosine + formate + L-methionine + 3 H(+). It functions in the pathway cofactor biosynthesis; thiamine diphosphate biosynthesis. In terms of biological role, catalyzes the synthesis of the hydroxymethylpyrimidine phosphate (HMP-P) moiety of thiamine from aminoimidazole ribotide (AIR) in a radical S-adenosyl-L-methionine (SAM)-dependent reaction. This is Phosphomethylpyrimidine synthase from Dehalococcoides mccartyi (strain ATCC BAA-2100 / JCM 16839 / KCTC 5957 / BAV1).